We begin with the raw amino-acid sequence, 459 residues long: tRNA modification GTPase MnmE (459 aa).

Positions 22, 87, and 126 each coordinate (6S)-5-formyl-5,6,7,8-tetrahydrofolate. A TrmE-type G domain is found at 221-381 (GINVAICGKP…LEESIEKAVL (161 aa)). Asn231 is a K(+) binding site. Residues 231 to 236 (NVGKSS), 250 to 256 (TSIPGTT), and 275 to 278 (DTAG) contribute to the GTP site. Position 235 (Ser235) interacts with Mg(2+). The K(+) site is built by Thr250, Ile252, and Thr255. Residue Thr256 coordinates Mg(2+). Lys459 provides a ligand contact to (6S)-5-formyl-5,6,7,8-tetrahydrofolate.

Belongs to the TRAFAC class TrmE-Era-EngA-EngB-Septin-like GTPase superfamily. TrmE GTPase family. As to quaternary structure, homodimer. Heterotetramer of two MnmE and two MnmG subunits. Requires K(+) as cofactor.

Its subcellular location is the cytoplasm. Its function is as follows. Exhibits a very high intrinsic GTPase hydrolysis rate. Involved in the addition of a carboxymethylaminomethyl (cmnm) group at the wobble position (U34) of certain tRNAs, forming tRNA-cmnm(5)s(2)U34. This is tRNA modification GTPase MnmE from Syntrophomonas wolfei subsp. wolfei (strain DSM 2245B / Goettingen).